Consider the following 353-residue polypeptide: Photosystem II protein D1 (353 aa).

Residue T2 is modified to N-acetylthreonine. T2 carries the post-translational modification Phosphothreonine. The next 3 membrane-spanning stretches (helical) occupy residues 29-46, 118-133, and 142-156; these read NIGWFGVLMIPTLLTATS, HFLLGVACYMGREWEL, and WIAVAYSAPVAAATA. H118 lines the chlorophyll a pocket. Y126 contacts pheophytin a. The [CaMn4O5] cluster site is built by D170 and E189. Residues 197 to 218 form a helical membrane-spanning segment; sequence FHMLGVAGVFGGSLFSAMHGSL. Residue H198 participates in chlorophyll a binding. Residues H215 and 264–265 each bind a quinone; that span reads SF. H215 is a Fe cation binding site. Position 272 (H272) interacts with Fe cation. Residues 274–288 traverse the membrane as a helical segment; sequence FLAAWPVVGIWFTAL. 4 residues coordinate [CaMn4O5] cluster: H332, E333, D342, and A344. The propeptide occupies 345 to 353; the sequence is AVEAPAVNG.

This sequence belongs to the reaction center PufL/M/PsbA/D family. As to quaternary structure, PSII is composed of 1 copy each of membrane proteins PsbA, PsbB, PsbC, PsbD, PsbE, PsbF, PsbH, PsbI, PsbJ, PsbK, PsbL, PsbM, PsbT, PsbX, PsbY, PsbZ, Psb30/Ycf12, at least 3 peripheral proteins of the oxygen-evolving complex and a large number of cofactors. It forms dimeric complexes. The D1/D2 heterodimer binds P680, chlorophylls that are the primary electron donor of PSII, and subsequent electron acceptors. It shares a non-heme iron and each subunit binds pheophytin, quinone, additional chlorophylls, carotenoids and lipids. D1 provides most of the ligands for the Mn4-Ca-O5 cluster of the oxygen-evolving complex (OEC). There is also a Cl(-1) ion associated with D1 and D2, which is required for oxygen evolution. The PSII complex binds additional chlorophylls, carotenoids and specific lipids. serves as cofactor. Tyr-161 forms a radical intermediate that is referred to as redox-active TyrZ, YZ or Y-Z. In terms of processing, C-terminally processed by CTPA; processing is essential to allow assembly of the oxygen-evolving complex and thus photosynthetic growth.

The protein localises to the plastid. The protein resides in the chloroplast thylakoid membrane. It carries out the reaction 2 a plastoquinone + 4 hnu + 2 H2O = 2 a plastoquinol + O2. Photosystem II (PSII) is a light-driven water:plastoquinone oxidoreductase that uses light energy to abstract electrons from H(2)O, generating O(2) and a proton gradient subsequently used for ATP formation. It consists of a core antenna complex that captures photons, and an electron transfer chain that converts photonic excitation into a charge separation. The D1/D2 (PsbA/PsbD) reaction center heterodimer binds P680, the primary electron donor of PSII as well as several subsequent electron acceptors. This is Photosystem II protein D1 from Dumortiera hirsuta (Liverwort).